Reading from the N-terminus, the 38-residue chain is Photosystem II reaction center protein Y (38 aa).

Residues 5 to 23 (VVVVLAPVIIAGSWAIFNI) traverse the membrane as a helical segment.

This sequence belongs to the PsbY family. As to quaternary structure, PSII is composed of 1 copy each of membrane proteins PsbA, PsbB, PsbC, PsbD, PsbE, PsbF, PsbH, PsbI, PsbJ, PsbK, PsbL, PsbM, PsbT, PsbX, PsbY, PsbZ, Psb30/Ycf12, peripheral proteins PsbO, CyanoQ (PsbQ), PsbU, PsbV and a large number of cofactors. It forms dimeric complexes.

It localises to the cellular thylakoid membrane. In terms of biological role, loosely associated component of the core of photosystem II (PSII), it is not always seen in crystals. PSII is a light-driven water plastoquinone oxidoreductase, using light energy to abstract electrons from H(2)O, generating a proton gradient subsequently used for ATP formation. The protein is Photosystem II reaction center protein Y of Picosynechococcus sp. (strain ATCC 27264 / PCC 7002 / PR-6) (Agmenellum quadruplicatum).